A 171-amino-acid polypeptide reads, in one-letter code: Myosin regulatory light polypeptide 9 (171 aa).

The span at 1–15 (MSSKRAKAKTTKKRP) shows a compositional bias: basic residues. Residues 1-21 (MSSKRAKAKTTKKRPQSATSN) are disordered. Ser-2 is subject to N-acetylserine. A Phosphothreonine; by MLCK, CIT and ROCK2 modification is found at Thr-19. At Ser-20 the chain carries Phosphoserine; by CDC42BP, CIT, MLCK, PAK1, ROCK1, ROCK2, DAPK1, DAPK2 and ZIPK/DAPK3. 2 EF-hand domains span residues 29–64 (SQIQEFKEAFNMIDQNRDGFIDKEDLHDMLASLGKN) and 98–133 (DPEDVIRNAFACFDEEASGFIHEDHLRELLTTMGDR). Ca(2+) contacts are provided by Asp-42, Asn-44, Asp-46, and Asp-53.

Myosin is a hexamer of 2 heavy chains and 4 light chains: interacts with myosin heavy chain MYO19. Interacts with LUZP1; the interaction results in inhibition of phosphorylation of MYL9 by DAPK3. Phosphorylation increases the actin-activated myosin ATPase activity and thereby regulates the contractile activity. It is required to generate the driving force in the migration of the cells but not necessary for localization of myosin-2 at the leading edge. Phosphorylation is required for myotube formation. Phosphorylated by DAPK3; DAPK3-mediated phosphorylation is inhibited by LUZP1. In terms of tissue distribution, smooth muscle tissues and in some, but not all, nonmuscle cells.

It localises to the cytoplasm. The protein resides in the cytoskeleton. It is found in the cell cortex. Its function is as follows. Myosin regulatory subunit that plays an important role in regulation of both smooth muscle and nonmuscle cell contractile activity via its phosphorylation. Implicated in cytokinesis, receptor capping, and cell locomotion. In myoblasts, may regulate PIEZO1-dependent cortical actomyosin assembly involved in myotube formation. This is Myosin regulatory light polypeptide 9 (Myl9) from Rattus norvegicus (Rat).